The primary structure comprises 340 residues: Ketol-acid reductoisomerase (NADP(+)) (340 aa).

One can recognise a KARI N-terminal Rossmann domain in the interval 3–182 (VEMLYEADVK…GSARVGLLVT (180 aa)). NADP(+) contacts are provided by residues 26–29 (YGSQ), R49, S53, and 83–86 (DEIQ). H108 is a catalytic residue. Residue G134 coordinates NADP(+). The 146-residue stretch at 183 to 328 (TFKEETEEDL…AELRKAMPFV (146 aa)) folds into the KARI C-terminal knotted domain. The Mg(2+) site is built by D191, E195, E227, and E231. Substrate is bound at residue S252.

This sequence belongs to the ketol-acid reductoisomerase family. It depends on Mg(2+) as a cofactor.

It carries out the reaction (2R)-2,3-dihydroxy-3-methylbutanoate + NADP(+) = (2S)-2-acetolactate + NADPH + H(+). The catalysed reaction is (2R,3R)-2,3-dihydroxy-3-methylpentanoate + NADP(+) = (S)-2-ethyl-2-hydroxy-3-oxobutanoate + NADPH + H(+). The protein operates within amino-acid biosynthesis; L-isoleucine biosynthesis; L-isoleucine from 2-oxobutanoate: step 2/4. It participates in amino-acid biosynthesis; L-valine biosynthesis; L-valine from pyruvate: step 2/4. Involved in the biosynthesis of branched-chain amino acids (BCAA). Catalyzes an alkyl-migration followed by a ketol-acid reduction of (S)-2-acetolactate (S2AL) to yield (R)-2,3-dihydroxy-isovalerate. In the isomerase reaction, S2AL is rearranged via a Mg-dependent methyl migration to produce 3-hydroxy-3-methyl-2-ketobutyrate (HMKB). In the reductase reaction, this 2-ketoacid undergoes a metal-dependent reduction by NADPH to yield (R)-2,3-dihydroxy-isovalerate. The sequence is that of Ketol-acid reductoisomerase (NADP(+)) from Streptococcus mutans serotype c (strain ATCC 700610 / UA159).